A 332-amino-acid chain; its full sequence is Probable allantoicase (332 aa).

Belongs to the allantoicase family.

The catalysed reaction is allantoate + H2O = (S)-ureidoglycolate + urea. It functions in the pathway nitrogen metabolism; (S)-allantoin degradation; (S)-ureidoglycolate from allantoate (aminidohydrolase route): step 1/1. This Pseudomonas paraeruginosa (strain DSM 24068 / PA7) (Pseudomonas aeruginosa (strain PA7)) protein is Probable allantoicase.